The sequence spans 413 residues: Tyrosine--tRNA ligase (413 aa).

The 'HIGH' region motif lies at 59–68; the sequence is PTAPDIHLGH. Residues 243-247 carry the 'KMSKS' region motif; that stretch reads KMSKS. Lysine 246 contributes to the ATP binding site. One can recognise an S4 RNA-binding domain in the interval 351–411; that stretch reads LAIGQLLKQA…GKRRFARVTL (61 aa).

It belongs to the class-I aminoacyl-tRNA synthetase family. TyrS type 2 subfamily. In terms of assembly, homodimer.

It localises to the cytoplasm. It carries out the reaction tRNA(Tyr) + L-tyrosine + ATP = L-tyrosyl-tRNA(Tyr) + AMP + diphosphate + H(+). Catalyzes the attachment of tyrosine to tRNA(Tyr) in a two-step reaction: tyrosine is first activated by ATP to form Tyr-AMP and then transferred to the acceptor end of tRNA(Tyr). The sequence is that of Tyrosine--tRNA ligase from Burkholderia thailandensis (strain ATCC 700388 / DSM 13276 / CCUG 48851 / CIP 106301 / E264).